We begin with the raw amino-acid sequence, 66 residues long: Sodium channel neurotoxin MeuNaTxalpha-7 (66 aa).

An LCN-type CS-alpha/beta domain is found at 2-64 (RDGYIADDKN…VPIKVSGKCN (63 aa)). Intrachain disulfides connect Cys12–Cys63, Cys16–Cys36, Cys22–Cys46, and Cys26–Cys48. Asn64 bears the Asparagine amide mark.

The protein belongs to the long (4 C-C) scorpion toxin superfamily. Sodium channel inhibitor family. Alpha subfamily. Expressed by the venom gland.

The protein localises to the secreted. In terms of biological role, alpha toxins bind voltage-independently at site-3 of sodium channels (Nav) and inhibit the inactivation of the activated channels, thereby blocking neuronal transmission. This Mesobuthus eupeus (Lesser Asian scorpion) protein is Sodium channel neurotoxin MeuNaTxalpha-7.